Consider the following 115-residue polypeptide: Large ribosomal subunit protein bL19 (115 aa).

The protein belongs to the bacterial ribosomal protein bL19 family.

Functionally, this protein is located at the 30S-50S ribosomal subunit interface and may play a role in the structure and function of the aminoacyl-tRNA binding site. In Fervidobacterium nodosum (strain ATCC 35602 / DSM 5306 / Rt17-B1), this protein is Large ribosomal subunit protein bL19.